The primary structure comprises 389 residues: Galactose-1-phosphate uridylyltransferase (389 aa).

It belongs to the galactose-1-phosphate uridylyltransferase type 2 family.

The protein localises to the cytoplasm. The catalysed reaction is alpha-D-galactose 1-phosphate + UDP-alpha-D-glucose = alpha-D-glucose 1-phosphate + UDP-alpha-D-galactose. The protein operates within carbohydrate metabolism; galactose metabolism. This is Galactose-1-phosphate uridylyltransferase (galT) from Butyrivibrio fibrisolvens.